The sequence spans 166 residues: Interferon gamma (166 aa).

Residues 1-23 (MNYTSFILAFQLCAILGSSTYYC) form the signal peptide. The residue at position 24 (Q24) is a Pyrrolidone carboxylic acid. 2 N-linked (GlcNAc...) asparagine glycosylation sites follow: N39 and N106. The interval 147-166 (ANLRKRKRSQNPFRGRRALQ) is disordered. Residues 148–166 (NLRKRKRSQNPFRGRRALQ) are compositionally biased toward basic residues.

It belongs to the type II (or gamma) interferon family. As to quaternary structure, homodimer. Interacts with IFNGR1 (via extracellular domain); this interaction promotes IFNGR1 dimerization. In terms of tissue distribution, released primarily from activated T lymphocytes.

Its subcellular location is the secreted. Functionally, type II interferon produced by immune cells such as T-cells and NK cells that plays crucial roles in antimicrobial, antiviral, and antitumor responses by activating effector immune cells and enhancing antigen presentation. Primarily signals through the JAK-STAT pathway after interaction with its receptor IFNGR1 to affect gene regulation. Upon IFNG binding, IFNGR1 intracellular domain opens out to allow association of downstream signaling components JAK2, JAK1 and STAT1, leading to STAT1 activation, nuclear translocation and transcription of IFNG-regulated genes. Many of the induced genes are transcription factors such as IRF1 that are able to further drive regulation of a next wave of transcription. Plays a role in class I antigen presentation pathway by inducing a replacement of catalytic proteasome subunits with immunoproteasome subunits. In turn, increases the quantity, quality, and repertoire of peptides for class I MHC loading. Increases the efficiency of peptide generation also by inducing the expression of activator PA28 that associates with the proteasome and alters its proteolytic cleavage preference. Up-regulates as well MHC II complexes on the cell surface by promoting expression of several key molecules such as cathepsins B/CTSB, H/CTSH, and L/CTSL. Participates in the regulation of hematopoietic stem cells during development and under homeostatic conditions by affecting their development, quiescence, and differentiation. The protein is Interferon gamma (IFNG) of Equus asinus (Donkey).